Consider the following 394-residue polypeptide: Glycerol-1-phosphate dehydrogenase [NAD(P)+] (394 aa).

Residues D54, 116-120 (GTIHD), and 138-141 (TAPS) contribute to the NAD(+) site. Residue D143 participates in substrate binding. Position 147 (S147) interacts with NAD(+). D190 serves as a coordination point for substrate. D190 and H270 together coordinate Ni(2+). A substrate-binding site is contributed by H274. Ni(2+) is bound at residue H290.

This sequence belongs to the glycerol-1-phosphate dehydrogenase family. In terms of assembly, homodimer. Requires Ni(2+) as cofactor.

It is found in the cytoplasm. The catalysed reaction is sn-glycerol 1-phosphate + NAD(+) = dihydroxyacetone phosphate + NADH + H(+). The enzyme catalyses sn-glycerol 1-phosphate + NADP(+) = dihydroxyacetone phosphate + NADPH + H(+). Its function is as follows. Catalyzes the NAD(P)H-dependent reduction of dihydroxyacetonephosphate (DHAP or glycerone phosphate) to glycerol 1-phosphate (G1P). The G1P thus generated is probably used for the synthesis of phosphoglycerolipids in Gram-positive bacterial species. Prefers NADH over NADPH as coenzyme. Is also able to catalyze the reverse reaction, i.e. the NAD(+)-dependent oxidation of G1P but not of G3P. Does not possess glycerol dehydrogenase activity. The protein is Glycerol-1-phosphate dehydrogenase [NAD(P)+] (egsA) of Bacillus subtilis (strain 168).